Consider the following 286-residue polypeptide: AB hydrolase superfamily protein YfhM (286 aa).

The 246-residue stretch at 27–272 (PLIVLLHGFP…ASHWINHEKP (246 aa)) folds into the AB hydrolase-1 domain. The active-site Nucleophile is the Asp-103. Catalysis depends on Tyr-210, which acts as the Proton donor. The active-site Proton acceptor is the His-265.

This sequence belongs to the AB hydrolase superfamily. Epoxide hydrolase family.

The sequence is that of AB hydrolase superfamily protein YfhM (yfhM) from Bacillus subtilis (strain 168).